An 839-amino-acid polypeptide reads, in one-letter code: Protein translocase subunit SecA (839 aa).

Residues Gln-85, 103-107 (GEGKT), and Asp-493 contribute to the ATP site. Over residues 780-790 (QIHEQERERAS) the composition is skewed to basic and acidic residues. A disordered region spans residues 780–839 (QIHEQERERASQRATTAAPQNIQSQQSANTDDLPKVERNEACPCGSGKKFKNCHGRKSFS). Residues 791–809 (QRATTAAPQNIQSQQSANT) are compositionally biased toward polar residues. 4 residues coordinate Zn(2+): Cys-821, Cys-823, Cys-832, and His-833. Positions 827–839 (KKFKNCHGRKSFS) are enriched in basic residues.

This sequence belongs to the SecA family. Monomer and homodimer. Part of the essential Sec protein translocation apparatus which comprises SecA, SecYEG and auxiliary proteins SecDF. Other proteins may also be involved. Requires Zn(2+) as cofactor.

It localises to the cell membrane. Its subcellular location is the cytoplasm. The enzyme catalyses ATP + H2O + cellular proteinSide 1 = ADP + phosphate + cellular proteinSide 2.. In terms of biological role, part of the Sec protein translocase complex. Interacts with the SecYEG preprotein conducting channel. Has a central role in coupling the hydrolysis of ATP to the transfer of proteins into and across the cell membrane, serving as an ATP-driven molecular motor driving the stepwise translocation of polypeptide chains across the membrane. The protein is Protein translocase subunit SecA of Streptococcus pyogenes serotype M28 (strain MGAS6180).